The sequence spans 142 residues: Small ribosomal subunit protein uS8c (142 aa).

This sequence belongs to the universal ribosomal protein uS8 family. Part of the 30S ribosomal subunit.

Its subcellular location is the plastid. One of the primary rRNA binding proteins, it binds directly to 16S rRNA central domain where it helps coordinate assembly of the platform of the 30S subunit. This is Small ribosomal subunit protein uS8c (rps8) from Euglena longa (Euglenophycean alga).